Here is a 376-residue protein sequence, read N- to C-terminus: N-acetyldiaminopimelate deacetylase (376 aa).

Asp-69 is an active-site residue. The active-site Proton acceptor is the Glu-128.

Belongs to the peptidase M20A family. N-acetyldiaminopimelate deacetylase subfamily.

It carries out the reaction N-acetyl-(2S,6S)-2,6-diaminopimelate + H2O = (2S,6S)-2,6-diaminopimelate + acetate. It participates in amino-acid biosynthesis; L-lysine biosynthesis via DAP pathway; LL-2,6-diaminopimelate from (S)-tetrahydrodipicolinate (acetylase route): step 3/3. In terms of biological role, catalyzes the conversion of N-acetyl-diaminopimelate to diaminopimelate and acetate. In Streptococcus pneumoniae (strain CGSP14), this protein is N-acetyldiaminopimelate deacetylase.